The following is a 399-amino-acid chain: All trans-polyprenyl-diphosphate synthase PDSS2 (399 aa).

The protein belongs to the FPP/GGPP synthase family. Heterotetramer composed of 2 PDSS1/DPS1 and 2 PDSS2/DLP1 subunits.

It is found in the mitochondrion. It carries out the reaction 7 isopentenyl diphosphate + (2E,6E)-farnesyl diphosphate = all-trans-decaprenyl diphosphate + 7 diphosphate. The enzyme catalyses 6 isopentenyl diphosphate + (2E,6E)-farnesyl diphosphate = all-trans-nonaprenyl diphosphate + 6 diphosphate. It functions in the pathway cofactor biosynthesis; ubiquinone biosynthesis. In terms of biological role, heterotetrameric enzyme that catalyzes the condensation of farnesyl diphosphate (FPP), which acts as a primer, and isopentenyl diphosphate (IPP) to produce prenyl diphosphates of varying chain lengths and participates in the determination of the side chain of ubiquinone. Supplies nona and decaprenyl diphosphate, the precursors for the side chain of the isoprenoid quinones ubiquinone-9 (Q9) and ubiquinone-10 (Q10) respectively. The enzyme adds isopentenyl diphosphate molecules sequentially to farnesyl diphosphate with trans stereochemistry. May play a role during cerebellar development. May regulate mitochondrial respiratory chain function. The sequence is that of All trans-polyprenyl-diphosphate synthase PDSS2 from Homo sapiens (Human).